Here is a 286-residue protein sequence, read N- to C-terminus: Tungstate-binding protein TupA (286 aa).

Positions 1–20 are cleaved as a signal peptide; the sequence is MKRLLSIITAVMMLALALTG. Cysteine 21 carries N-palmitoyl cysteine lipidation. The S-diacylglycerol cysteine moiety is linked to residue cysteine 21.

As to quaternary structure, monomer. The complex is composed of two ATP-binding proteins (TupC), two transmembrane proteins (TupB) and a solute-binding protein (TupA).

The protein resides in the cell membrane. Its function is as follows. Part of an ABC transporter complex involved in tungstate uptake. Specifically binds tungstate. This chain is Tungstate-binding protein TupA, found in Peptoclostridium acidaminophilum (Eubacterium acidaminophilum).